A 713-amino-acid chain; its full sequence is Asp/Glu-specific dipeptidyl-peptidase (713 aa).

The N-terminal stretch at 1 to 17 is a signal peptide; sequence MKYLKLFLLLFIIQTQA. Catalysis depends on charge relay system residues histidine 83, aspartate 219, and serine 644.

It belongs to the peptidase S46 family.

Catalyzes the removal of dipeptides from the N-terminus of oligopeptides. Shows a strict specificity for acidic residues (Asp or Glu) in the P1 position, and has probably a hydrophobic residue preference at the P2 position. Preferentially cleaves the synthetic substrate Leu-Asp-methylcoumaryl-7-amide (Leu-Asp-MCA) as compared to Leu-Glu-MCA. This is Asp/Glu-specific dipeptidyl-peptidase (dpp11) from Flavobacterium psychrophilum (strain ATCC 49511 / DSM 21280 / CIP 103535 / JIP02/86).